Reading from the N-terminus, the 584-residue chain is AAA ATPase forming ring-shaped complexes (584 aa).

The stretch at Ala10 to His96 forms a coiled coil. The interval His40–Ala66 is disordered. Residue Gly292–Met297 coordinates ATP.

Belongs to the AAA ATPase family. Homohexamer. Assembles into a hexameric ring structure.

This is AAA ATPase forming ring-shaped complexes from Micrococcus luteus (strain ATCC 4698 / DSM 20030 / JCM 1464 / CCM 169 / CCUG 5858 / IAM 1056 / NBRC 3333 / NCIMB 9278 / NCTC 2665 / VKM Ac-2230) (Micrococcus lysodeikticus).